A 337-amino-acid chain; its full sequence is Tryptophan--tRNA ligase (337 aa).

ATP is bound by residues 11 to 13 and 19 to 20; these read QPT and GN. The 'HIGH' region signature appears at 12–20; sequence PTGNLHLGN. Aspartate 135 is a binding site for L-tryptophan. ATP contacts are provided by residues 147–149, valine 190, and 199–203; these read GED and KMSKS. The short motif at 199–203 is the 'KMSKS' region element; the sequence is KMSKS.

This sequence belongs to the class-I aminoacyl-tRNA synthetase family. Homodimer.

Its subcellular location is the cytoplasm. It carries out the reaction tRNA(Trp) + L-tryptophan + ATP = L-tryptophyl-tRNA(Trp) + AMP + diphosphate + H(+). Catalyzes the attachment of tryptophan to tRNA(Trp). This is Tryptophan--tRNA ligase from Synechocystis sp. (strain ATCC 27184 / PCC 6803 / Kazusa).